The following is a 480-amino-acid chain: Sensor histidine kinase CusS (480 aa).

Topologically, residues 1 to 15 (MVSKPFQRPFSLATR) are cytoplasmic. The helical transmembrane segment at 16–36 (LTFFISLATIAAFFAFAWIMI) threads the bilayer. Topologically, residues 37–186 (HSVKVHFAEQ…LHYINDLMNK (150 aa)) are periplasmic. A helical transmembrane segment spans residues 187–207 (LIMTASVISILIVFIVLLAVH). The region spanning 208–260 (KGHAPIRSVSRQIQNITSKDLDVRLDPQTVPIELEQLVLSFNHMIERIEDVFT) is the HAMP domain. Over 208 to 480 (KGHAPIRSVS…GTRFVITLPA (273 aa)) the chain is Cytoplasmic. The 213-residue stretch at 268–480 (DIAHEIRTPI…GTRFVITLPA (213 aa)) folds into the Histidine kinase domain. Residue histidine 271 is modified to Phosphohistidine; by autocatalysis.

Post-translationally, autophosphorylated.

It localises to the cell inner membrane. The enzyme catalyses ATP + protein L-histidine = ADP + protein N-phospho-L-histidine.. Member of the two-component regulatory system CusS/CusR involved in response to copper and silver. Acts as a copper/silver ion sensor. Activates CusR by phosphorylation. This Escherichia coli (strain K12) protein is Sensor histidine kinase CusS (cusS).